A 361-amino-acid polypeptide reads, in one-letter code: MSFAVARMTKLKADNLVGIGNHDQRKTTNHSNEDIDVSRSHLNYDLVAGRTDNFKTDIEAYINENKASKRAVRKDAVLVNEWIITSDKDFFEQLDEAETRKYFETAKQYFADNYGDENIRYAVVHMDEKTPHMHMGIVPFDDDKKLSAKRIFNREALQHIQEELPQYLKENGFDVQRGNKNKERKNLSVPEYKAMREELKKIETEKQETQAKLADTKKQLDEIKPRDTKKIASKPTLMNKNKVTVDKSDLADLEQRAVTSDAYNFEKIHLEVGNHSLRNDLSEAKGRNYELRKENERLQKLVGTLQGIIRNVDEFLHKKLGINLPEKWLERAGLKEPSKKAPESSQELDRHKSDELGGPHL.

Positions 44 and 114 each coordinate DNA. Positions 331-361 are disordered; it reads RAGLKEPSKKAPESSQELDRHKSDELGGPHL.

It belongs to the plasmid mobilization pre family.

Functionally, the interaction of the RSA site and the pre protein may not only serve a function in plasmid maintenance, but also contribute to the distribution of small antibiotic resistance plasmids among Gram-positive bacteria. This Lactiplantibacillus plantarum (Lactobacillus plantarum) protein is Plasmid recombination enzyme (preA).